Here is a 299-residue protein sequence, read N- to C-terminus: GTPase Era (299 aa).

The Era-type G domain occupies 4-171 (KSGFVAILGR…VDILSENLDE (168 aa)). Residues 12 to 19 (GRPNVGKS) form a G1 region. 12-19 (GRPNVGKS) contacts GTP. A G2 region spans residues 38–42 (XTTRN). The tract at residues 59 to 62 (DTPG) is G3. GTP is bound by residues 59-63 (DTPGI) and 121-124 (NKID). The segment at 121–124 (NKID) is G4. The segment at 150-152 (ISA) is G5. The 79-residue stretch at 202–280 (TREEIPHSVA…FLETWVKVKK (79 aa)) folds into the KH type-2 domain.

The protein belongs to the TRAFAC class TrmE-Era-EngA-EngB-Septin-like GTPase superfamily. Era GTPase family. As to quaternary structure, monomer.

The protein resides in the cytoplasm. It is found in the cell membrane. An essential GTPase that binds both GDP and GTP, with rapid nucleotide exchange. Plays a role in 16S rRNA processing and 30S ribosomal subunit biogenesis and possibly also in cell cycle regulation and energy metabolism. The chain is GTPase Era from Streptococcus pneumoniae serotype 19F (strain G54).